We begin with the raw amino-acid sequence, 252 residues long: Chitooligosaccharide deacetylase (252 aa).

Residues His-61 and His-125 each contribute to the Mg(2+) site.

Belongs to the YdjC deacetylase family. ChbG subfamily. As to quaternary structure, homodimer. Mg(2+) is required as a cofactor.

It localises to the cytoplasm. It carries out the reaction N,N'-diacetylchitobiose + H2O = N-acetyl-beta-D-glucosaminyl-(1-&gt;4)-D-glucosamine + acetate. The catalysed reaction is diacetylchitobiose-6'-phosphate + H2O = N'-monoacetylchitobiose-6'-phosphate + acetate. Its pathway is glycan degradation; chitin degradation. Its function is as follows. Involved in the degradation of chitin. ChbG is essential for growth on the acetylated chitooligosaccharides chitobiose and chitotriose but is dispensable for growth on cellobiose and chitosan dimer, the deacetylated form of chitobiose. Deacetylation of chitobiose-6-P and chitotriose-6-P is necessary for both the activation of the chb promoter by the regulatory protein ChbR and the hydrolysis of phosphorylated beta-glucosides by the phospho-beta-glucosidase ChbF. Catalyzes the removal of only one acetyl group from chitobiose-6-P to yield monoacetylchitobiose-6-P, the inducer of ChbR and the substrate of ChbF. This chain is Chitooligosaccharide deacetylase, found in Salmonella schwarzengrund (strain CVM19633).